Reading from the N-terminus, the 142-residue chain is Hemoglobin A subunit alpha-2 (142 aa).

Residues 2 to 142 (VLTAGDKANV…VAQNLTSKYR (141 aa)) form the Globin domain. Residue His59 coordinates O2. Residue His88 coordinates heme b.

Belongs to the globin family. As to quaternary structure, tetramer of alpha-1, alpha-2 and two identical beta chains. As to expression, red blood cells.

Its function is as follows. Involved in oxygen transport from the lung to the various peripheral tissues. In Aldabrachelys gigantea (Aldabra giant tortoise), this protein is Hemoglobin A subunit alpha-2.